The sequence spans 288 residues: Homoserine kinase (288 aa).

Pro79 to Ala89 provides a ligand contact to ATP.

Belongs to the GHMP kinase family. Homoserine kinase subfamily.

The protein resides in the cytoplasm. The catalysed reaction is L-homoserine + ATP = O-phospho-L-homoserine + ADP + H(+). Its pathway is amino-acid biosynthesis; L-threonine biosynthesis; L-threonine from L-aspartate: step 4/5. Catalyzes the ATP-dependent phosphorylation of L-homoserine to L-homoserine phosphate. The polypeptide is Homoserine kinase (Listeria welshimeri serovar 6b (strain ATCC 35897 / DSM 20650 / CCUG 15529 / CIP 8149 / NCTC 11857 / SLCC 5334 / V8)).